A 352-amino-acid chain; its full sequence is tRNA pseudouridine synthase D (352 aa).

Residue aspartate 81 is the Nucleophile of the active site. Positions 157–303 constitute a TRUD domain; the sequence is GVPNYFGTQR…MDHERRILRL (147 aa).

This sequence belongs to the pseudouridine synthase TruD family.

It carries out the reaction uridine(13) in tRNA = pseudouridine(13) in tRNA. Its function is as follows. Responsible for synthesis of pseudouridine from uracil-13 in transfer RNAs. The chain is tRNA pseudouridine synthase D from Pseudomonas putida (strain GB-1).